The sequence spans 217 residues: Ras-related protein RABA1g (217 aa).

20–27 (GDSGVGKS) contacts GTP. The short motif at 42–50 (SKSTIGVEF) is the Effector region element. GTP contacts are provided by residues 68–72 (DTAGQ), 126–129 (NKAD), and 156–157 (SA). 2 S-geranylgeranyl cysteine lipidation sites follow: Cys214 and Cys215.

This sequence belongs to the small GTPase superfamily. Rab family.

It localises to the cell membrane. Intracellular vesicle trafficking and protein transport. This is Ras-related protein RABA1g (RABA1G) from Arabidopsis thaliana (Mouse-ear cress).